The primary structure comprises 256 residues: MNDPRKGADAEPTTHFGYQNVPESQKAKKVAEVFHSVAAKYDLMNDLMSGGIHRLWKRFTIELSGVRSGNRVLDIAGGTGDLTRQFSRLVGPSGEVVLADINASMLKVGRDKLLDKGVSGNVSFVQADAEKLPFPDNHFDCVTIAFGLRNVTHKDEAIRSMLRVLKPGGRLLVLEFSKPSSSLLSKAYDAYSFSLLPLMGKLVTNDAESYRYLAESIRMHPDQETLKAMMVEAGFDRVTYHNMTGGIVALHRGIKP.

S-adenosyl-L-methionine is bound by residues threonine 79, aspartate 100, and 128–129 (DA).

Belongs to the class I-like SAM-binding methyltransferase superfamily. MenG/UbiE family.

It carries out the reaction a 2-demethylmenaquinol + S-adenosyl-L-methionine = a menaquinol + S-adenosyl-L-homocysteine + H(+). The catalysed reaction is a 2-methoxy-6-(all-trans-polyprenyl)benzene-1,4-diol + S-adenosyl-L-methionine = a 5-methoxy-2-methyl-3-(all-trans-polyprenyl)benzene-1,4-diol + S-adenosyl-L-homocysteine + H(+). Its pathway is quinol/quinone metabolism; menaquinone biosynthesis; menaquinol from 1,4-dihydroxy-2-naphthoate: step 2/2. It functions in the pathway cofactor biosynthesis; ubiquinone biosynthesis. Its function is as follows. Methyltransferase required for the conversion of demethylmenaquinol (DMKH2) to menaquinol (MKH2) and the conversion of 2-polyprenyl-6-methoxy-1,4-benzoquinol (DDMQH2) to 2-polyprenyl-3-methyl-6-methoxy-1,4-benzoquinol (DMQH2). The sequence is that of Ubiquinone/menaquinone biosynthesis C-methyltransferase UbiE from Pseudomonas paraeruginosa (strain DSM 24068 / PA7) (Pseudomonas aeruginosa (strain PA7)).